The chain runs to 500 residues: NAD(P)H-quinone oxidoreductase chain 4, chloroplastic (500 aa).

Helical transmembrane passes span 4–24, 35–55, 80–100, 113–130, 134–154, 167–187, 208–228, 242–262, 274–294, 305–325, 330–350, 364–384, 386–406, 416–436, and 462–482; these read FYWLTIIVVLPISAGSLIALL, YTICICLFELLLTTYVFCYHF, LGIDGLSIGPILLTGFITTLA, LFHFLMLAMYSGQIGSFS, LLLFFIMWELELIPVYLLLSM, FILYTAGGSIFLLMGVLGMGL, ALEIIFYFGFLIAYAVKSPII, HYSTCMLLAGILLKMGAYGLV, SIFSPWLMIVGTIQIIYAALT, IAYSSVSHMGFIIIGISSITD, GAILQIISHGFIGAALFFLAG, MGGIAILMPRIFTMFSSFSMA, LALPGMSGFVAEFVIFLGIIT, ILITFVMAIGMILTPIYSLSM, and IFIFMCILLPIIGIGIYPDFV.

This sequence belongs to the complex I subunit 4 family.

It localises to the plastid. It is found in the chloroplast thylakoid membrane. It catalyses the reaction a plastoquinone + NADH + (n+1) H(+)(in) = a plastoquinol + NAD(+) + n H(+)(out). It carries out the reaction a plastoquinone + NADPH + (n+1) H(+)(in) = a plastoquinol + NADP(+) + n H(+)(out). The protein is NAD(P)H-quinone oxidoreductase chain 4, chloroplastic of Nymphaea alba (White water-lily).